Reading from the N-terminus, the 116-residue chain is Hydrogenase maturation factor HypA (116 aa).

Residue His-2 coordinates Ni(2+). Zn(2+) is bound by residues Cys-73, Cys-76, Cys-89, and Cys-92.

It belongs to the HypA/HybF family.

Functionally, involved in the maturation of [NiFe] hydrogenases. Required for nickel insertion into the metal center of the hydrogenase. The chain is Hydrogenase maturation factor HypA from Chlorobium limicola (strain DSM 245 / NBRC 103803 / 6330).